Here is a 417-residue protein sequence, read N- to C-terminus: uncharacterized protein (417 aa).

This is an uncharacterized protein from Sulfolobus islandicus rod-shaped virus 1 (SIRV-1).